Reading from the N-terminus, the 294-residue chain is Nitrogenase iron protein (294 aa).

11 to 18 is a binding site for ATP; it reads GKGGIGKS. Cys99 contacts [4Fe-4S] cluster. Arg102 carries the ADP-ribosylarginine; by dinitrogenase reductase ADP-ribosyltransferase modification. Cys133 contributes to the [4Fe-4S] cluster binding site.

The protein belongs to the NifH/BchL/ChlL family. Homodimer. Requires [4Fe-4S] cluster as cofactor. Post-translationally, the reversible ADP-ribosylation of Arg-102 inactivates the nitrogenase reductase and regulates nitrogenase activity.

It catalyses the reaction N2 + 8 reduced [2Fe-2S]-[ferredoxin] + 16 ATP + 16 H2O = H2 + 8 oxidized [2Fe-2S]-[ferredoxin] + 2 NH4(+) + 16 ADP + 16 phosphate + 6 H(+). Functionally, the key enzymatic reactions in nitrogen fixation are catalyzed by the nitrogenase complex, which has 2 components: the iron protein and the molybdenum-iron protein. This Bradyrhizobium diazoefficiens (strain JCM 10833 / BCRC 13528 / IAM 13628 / NBRC 14792 / USDA 110) protein is Nitrogenase iron protein (nifH).